Here is a 183-residue protein sequence, read N- to C-terminus: ATP synthase subunit delta (183 aa).

It belongs to the ATPase delta chain family. In terms of assembly, F-type ATPases have 2 components, F(1) - the catalytic core - and F(0) - the membrane proton channel. F(1) has five subunits: alpha(3), beta(3), gamma(1), delta(1), epsilon(1). F(0) has three main subunits: a(1), b(2) and c(10-14). The alpha and beta chains form an alternating ring which encloses part of the gamma chain. F(1) is attached to F(0) by a central stalk formed by the gamma and epsilon chains, while a peripheral stalk is formed by the delta and b chains.

It is found in the cell inner membrane. F(1)F(0) ATP synthase produces ATP from ADP in the presence of a proton or sodium gradient. F-type ATPases consist of two structural domains, F(1) containing the extramembraneous catalytic core and F(0) containing the membrane proton channel, linked together by a central stalk and a peripheral stalk. During catalysis, ATP synthesis in the catalytic domain of F(1) is coupled via a rotary mechanism of the central stalk subunits to proton translocation. In terms of biological role, this protein is part of the stalk that links CF(0) to CF(1). It either transmits conformational changes from CF(0) to CF(1) or is implicated in proton conduction. This chain is ATP synthase subunit delta, found in Chloroherpeton thalassium (strain ATCC 35110 / GB-78).